The primary structure comprises 238 residues: Probable transcriptional regulatory protein SSU05_0402 (238 aa).

The protein belongs to the TACO1 family. YeeN subfamily.

Its subcellular location is the cytoplasm. The polypeptide is Probable transcriptional regulatory protein SSU05_0402 (Streptococcus suis (strain 05ZYH33)).